We begin with the raw amino-acid sequence, 105 residues long: Imizoquin biosynthesis cluster protein I (105 aa).

The segment covering 1-15 has biased composition (polar residues); that stretch reads MSSGEPTTMTPSPSE. Residues 1–43 form a disordered region; sequence MSSGEPTTMTPSPSERTPLLSNGSGGAADDGGTTVTISKPNDG.

Its pathway is secondary metabolite biosynthesis. Functionally, part of the gene cluster that mediates the biosynthesis of imizoquins A to D, tripeptide-derived alkaloids that serve a protective role against oxidative stress that are essential for normal germination. ImqB is a canonical three-module NRPS that assembles the tripeptide backbone of the imizoquins via condensation of Trp, Tyr, and Leu-derived precursors. N-methylation by imqF and phenol oxidation by imqC, followed by cyclization via the FAD-dependent oxidase imqH carry out the three-step transformation of L-tyrosine into tetrahydroisoquinoline. Importantly, this sequence requires the presence of a free amine in the tyrosine moiety, indicating that isoquinoline formation occurs prior to peptide bond formation. The imidazolidin-4-one ring of imizoquins could form following additional oxidation of the methyl-derived bridgehead carbon by imqH. Lastly, O-methylation by imqG and leucine hydroxylation by imqE complete biosynthesis of the imizoquins. The polypeptide is Imizoquin biosynthesis cluster protein I (Aspergillus flavus (strain ATCC 200026 / FGSC A1120 / IAM 13836 / NRRL 3357 / JCM 12722 / SRRC 167)).